The following is a 261-amino-acid chain: Transmembrane protein 106A (261 aa).

The segment covering 1-10 has biased composition (polar residues); sequence MGKAFSQLTS. A disordered region spans residues 1 to 22; the sequence is MGKAFSQLTSQKDEDKSILPDN. A helical membrane pass occupies residues 93-113; the sequence is LSVFLAVTICLLIFSLTIFFL.

This sequence belongs to the TMEM106 family.

The protein localises to the cell membrane. In terms of biological role, activates macrophages and polarizes them into M1-like macrophages through the activation of the MAPK and NF-kappaB signaling pathway. Upon activation, up-regulates the expression of CD80, CD86, CD69 and MHC II on macrophages, and induces the release of pro-inflammatory cytokines such as TNF, IL1B, IL6, CCL2 and nitric oxide. May play a role in inhibition of proliferation and migration. The protein is Transmembrane protein 106A (Tmem106a) of Rattus norvegicus (Rat).